The chain runs to 531 residues: Sterol 26-hydroxylase, mitochondrial (531 aa).

The N-terminal 33 residues, 1–33 (MAALGCARLRWALRGAGRGLCPHGARAKAAIPA), are a transit peptide targeting the mitochondrion. The residue at position 283 (Lys283) is an N6-acetyllysine. The tract at residues 384–398 (PLLKAVLKETLRLYP) is sterol-binding. Cys476 is a binding site for heme. Lys509 and Lys520 each carry N6-acetyllysine.

This sequence belongs to the cytochrome P450 family. As to quaternary structure, interacts with HSP70; this interaction is required for initial targeting to mitochondria. The cofactor is heme. In terms of tissue distribution, expressed in the neural retina and underlying retinal pigment epithelium (at protein level). Expressed in the gray and white matter of cerebellum (at protein level).

Its subcellular location is the mitochondrion inner membrane. The enzyme catalyses 5beta-cholestane-3alpha,7alpha,12alpha-triol + 6 reduced [adrenodoxin] + 3 O2 + 5 H(+) = (25R)-3alpha,7alpha,12alpha-trihydroxy-5beta-cholestan-26-oate + 6 oxidized [adrenodoxin] + 4 H2O. It carries out the reaction cholestanol + 2 reduced [adrenodoxin] + O2 + 2 H(+) = (25R)-26-hydroxycholestanol + 2 oxidized [adrenodoxin] + H2O. The catalysed reaction is (25R)-3beta-hydroxycholest-5-en-7-one-26-al + 2 reduced [adrenodoxin] + O2 + H(+) = (25R)-3beta-hydroxycholest-5-en-7-one-26-oate + 2 oxidized [adrenodoxin] + H2O. It catalyses the reaction (25R)-3beta,26-dihydroxycholest-5-en-7-one + 2 reduced [adrenodoxin] + O2 + 2 H(+) = (25R)-3beta-hydroxycholest-5-en-7-one-26-al + 2 oxidized [adrenodoxin] + 2 H2O. The enzyme catalyses 7-oxocholesterol + 2 reduced [adrenodoxin] + O2 + 2 H(+) = (25R)-3beta,26-dihydroxycholest-5-en-7-one + 2 oxidized [adrenodoxin] + H2O. It carries out the reaction calciol + 2 reduced [adrenodoxin] + O2 + 2 H(+) = calcidiol + 2 oxidized [adrenodoxin] + H2O. The catalysed reaction is (25R)-5beta-cholestane-3alpha,7alpha,12alpha,26-tetrol + 2 reduced [adrenodoxin] + O2 + 2 H(+) = (25R)-3alpha,7alpha,12alpha-trihydroxy-5beta-cholestan-26-al + 2 oxidized [adrenodoxin] + 2 H2O. It catalyses the reaction 2 reduced [adrenodoxin] + cholesterol + O2 + 2 H(+) = (25R)-cholest-5-ene-3beta,26-diol + 2 oxidized [adrenodoxin] + H2O. The enzyme catalyses (25R)-3beta,4beta-dihydroxycholest-5-en-26-al + 2 reduced [adrenodoxin] + O2 + H(+) = (25R)-3beta,4beta-dihydroxycholest-5-en-26-oate + 2 oxidized [adrenodoxin] + H2O. It carries out the reaction (25R)-4beta,26-dihydroxycholesterol + 2 reduced [adrenodoxin] + O2 + 2 H(+) = (25R)-3beta,4beta-dihydroxycholest-5-en-26-al + 2 oxidized [adrenodoxin] + 2 H2O. The catalysed reaction is 4beta-hydroxycholesterol + 2 reduced [adrenodoxin] + O2 + 2 H(+) = (25R)-4beta,26-dihydroxycholesterol + 2 oxidized [adrenodoxin] + H2O. It catalyses the reaction (25R)-3beta-hydroxy-5-cholesten-26-al + 2 reduced [adrenodoxin] + O2 + H(+) = (25R)-3beta-hydroxy-5-cholestenoate + 2 oxidized [adrenodoxin] + H2O. The enzyme catalyses (25R)-cholest-5-ene-3beta,26-diol + 2 reduced [adrenodoxin] + O2 + 2 H(+) = (25R)-3beta-hydroxy-5-cholesten-26-al + 2 oxidized [adrenodoxin] + 2 H2O. It carries out the reaction (25R)-3alpha,7alpha,12alpha-trihydroxy-5beta-cholestan-26-al + 2 reduced [adrenodoxin] + O2 + H(+) = (25R)-3alpha,7alpha,12alpha-trihydroxy-5beta-cholestan-26-oate + 2 oxidized [adrenodoxin] + H2O. The catalysed reaction is 5beta-cholestane-3alpha,7alpha,12alpha-triol + 2 reduced [adrenodoxin] + O2 + 2 H(+) = (25R)-5beta-cholestane-3alpha,7alpha,12alpha,26-tetrol + 2 oxidized [adrenodoxin] + H2O. It participates in hormone biosynthesis; cholecalciferol biosynthesis. The protein operates within steroid metabolism; cholesterol degradation. Its pathway is lipid metabolism; bile acid biosynthesis. Its function is as follows. Cytochrome P450 monooxygenase that catalyzes regio- and stereospecific hydroxylation of cholesterol and its derivatives. Hydroxylates (with R stereochemistry) the terminal methyl group of cholesterol side-chain in a three step reaction to yield at first a C26 alcohol, then a C26 aldehyde and finally a C26 acid. Regulates cholesterol homeostasis by catalyzing the conversion of excess cholesterol to bile acids via both the 'neutral' (classic) and the 'acid' (alternative) pathways. May also regulate cholesterol homeostasis via generation of active oxysterols, which act as ligands for NR1H2 and NR1H3 nuclear receptors, modulating the transcription of genes involved in lipid metabolism. Plays a role in cholestanol metabolism in the cerebellum. Similarly to cholesterol, hydroxylates cholestanol and may facilitate sterol diffusion through the blood-brain barrier to the systemic circulation for further degradation. Also hydroxylates retinal 7-ketocholesterol, a noxious oxysterol with pro-inflammatory and pro-apoptotic effects, and may play a role in its elimination from the retinal pigment epithelium. May play a redundant role in vitamin D biosynthesis. Catalyzes 25-hydroxylation of vitamin D3 that is required for its conversion to a functionally active form. The polypeptide is Sterol 26-hydroxylase, mitochondrial (Homo sapiens (Human)).